The sequence spans 223 residues: MTQDQLKQAVAQAAVDHILPKLNDRSIVGVGTGSTANFFIDLLAKHKGFFDGAVASSEATAERLKQHGIPVYDLNSVSELEFYVDGADEANKHLELIKGGGAALTREKIVAAVAKTFICIADGSKLVEQLGAFPLPVEVIPMARSHVARELVKLGGDPVYRDGVVTDNGNVILDVHNLMIGFAPELEGKINDIVGVVSNGLFAMRPADLLLLGTQDGVQTLTR.

Residues 32–35, 85–88, and 98–101 contribute to the substrate site; these read TGST, DGAD, and KGGG. The active-site Proton acceptor is the Glu-107. Lys-125 lines the substrate pocket.

Belongs to the ribose 5-phosphate isomerase family. As to quaternary structure, homodimer.

The enzyme catalyses aldehydo-D-ribose 5-phosphate = D-ribulose 5-phosphate. It functions in the pathway carbohydrate degradation; pentose phosphate pathway; D-ribose 5-phosphate from D-ribulose 5-phosphate (non-oxidative stage): step 1/1. Functionally, catalyzes the reversible conversion of ribose-5-phosphate to ribulose 5-phosphate. The chain is Ribose-5-phosphate isomerase A from Stutzerimonas stutzeri (strain A1501) (Pseudomonas stutzeri).